A 376-amino-acid polypeptide reads, in one-letter code: 23S rRNA (uracil(747)-C(5))-methyltransferase RlmC (376 aa).

The [4Fe-4S] cluster site is built by Cys-3, Cys-11, Cys-14, and Cys-87. Residues Gln-212, Phe-241, Glu-262, and Asn-307 each contribute to the S-adenosyl-L-methionine site. Cys-334 (nucleophile) is an active-site residue.

It belongs to the class I-like SAM-binding methyltransferase superfamily. RNA M5U methyltransferase family. RlmC subfamily.

The enzyme catalyses uridine(747) in 23S rRNA + S-adenosyl-L-methionine = 5-methyluridine(747) in 23S rRNA + S-adenosyl-L-homocysteine + H(+). In terms of biological role, catalyzes the formation of 5-methyl-uridine at position 747 (m5U747) in 23S rRNA. The chain is 23S rRNA (uracil(747)-C(5))-methyltransferase RlmC from Salmonella typhimurium (strain LT2 / SGSC1412 / ATCC 700720).